A 131-amino-acid polypeptide reads, in one-letter code: Cell cycle protein GpsB (131 aa).

A coiled-coil region spans residues 39–76 (LDGIIRDYEAFTNEIDRLKEENTKLFSRVDELTKQLSV). The disordered stretch occupies residues 111–131 (KLSDSSVDNHDDGNHSDVDQY). The segment covering 117–131 (VDNHDDGNHSDVDQY) has biased composition (basic and acidic residues).

The protein belongs to the GpsB family. As to quaternary structure, forms polymers through the coiled coil domains. Interacts with PBP1, MreC and EzrA.

The protein resides in the cytoplasm. Its function is as follows. Divisome component that associates with the complex late in its assembly, after the Z-ring is formed, and is dependent on DivIC and PBP2B for its recruitment to the divisome. Together with EzrA, is a key component of the system that regulates PBP1 localization during cell cycle progression. Its main role could be the removal of PBP1 from the cell pole after pole maturation is completed. Also contributes to the recruitment of PBP1 to the division complex. Not essential for septum formation. This chain is Cell cycle protein GpsB, found in Lacticaseibacillus casei (strain BL23) (Lactobacillus casei).